Consider the following 108-residue polypeptide: Nucleoid-associated protein GWCH70_0020 (108 aa).

The interval 1–34 is disordered; sequence MMRGGMGNMQKMMKQMQKMQKEMQKAQEQLAEKT. Positions 9–18 are enriched in low complexity; it reads MQKMMKQMQK. Over residues 19-34 the composition is skewed to basic and acidic residues; the sequence is MQKEMQKAQEQLAEKT.

It belongs to the YbaB/EbfC family. As to quaternary structure, homodimer.

The protein localises to the cytoplasm. It is found in the nucleoid. Binds to DNA and alters its conformation. May be involved in regulation of gene expression, nucleoid organization and DNA protection. This chain is Nucleoid-associated protein GWCH70_0020, found in Geobacillus sp. (strain WCH70).